The following is a 103-amino-acid chain: Putative membrane protein insertion efficiency factor (103 aa).

This sequence belongs to the UPF0161 family.

It localises to the cell inner membrane. Its function is as follows. Could be involved in insertion of integral membrane proteins into the membrane. The protein is Putative membrane protein insertion efficiency factor of Chlamydia felis (strain Fe/C-56) (Chlamydophila felis).